The primary structure comprises 647 residues: Endogenous retrovirus group K member 8 Gag polyprotein (647 aa).

Residue Gly-2 is the site of N-myristoyl glycine attachment. The tract at residues 165-264 (GKGPELVGPS…APPSRQGSEL (100 aa)) is disordered. Positions 232–247 (GMPPAPQGREPYPQPP) are enriched in pro residues. 2 CCHC-type zinc fingers span residues 544-561 (GKCYNCGQIGHLKKNCPV) and 580-597 (DLCPRCKKGKHWASQCRS). A disordered region spans residues 598–641 (KFDKNGQPLSGNEQRGQPQAPQQTGAFPIQPFVPQGFQDNNPHC). The span at 604 to 622 (QPLSGNEQRGQPQAPQQTG) shows a compositional bias: polar residues.

This sequence belongs to the beta type-B retroviral Gag protein family. HERV class-II K(HML-2) gag subfamily. Post-translationally, myristoylation is essential for retroviral assembly. Alteration of the glycine residue leads to a block in the budding of particles and an accumulation of Gag inside the cell. In terms of processing, specific enzymatic cleavages may yield mature proteins.

The protein localises to the cell membrane. The products of the Gag polyproteins of infectious retroviruses perform highly complex orchestrated tasks during the assembly, budding, maturation, and infection stages of the viral replication cycle. During viral assembly, the proteins form membrane associations and self-associations that ultimately result in budding of an immature virion from the infected cell. Gag precursors also function during viral assembly to selectively bind and package two plus strands of genomic RNA. Endogenous Gag proteins may have kept, lost or modified their original function during evolution. This chain is Endogenous retrovirus group K member 8 Gag polyprotein (ERVK-8), found in Homo sapiens (Human).